Consider the following 151-residue polypeptide: 3-hydroxyacyl-[acyl-carrier-protein] dehydratase FabZ (151 aa).

The active site involves His57.

Belongs to the thioester dehydratase family. FabZ subfamily.

It localises to the cytoplasm. The enzyme catalyses a (3R)-hydroxyacyl-[ACP] = a (2E)-enoyl-[ACP] + H2O. Functionally, involved in unsaturated fatty acids biosynthesis. Catalyzes the dehydration of short chain beta-hydroxyacyl-ACPs and long chain saturated and unsaturated beta-hydroxyacyl-ACPs. The polypeptide is 3-hydroxyacyl-[acyl-carrier-protein] dehydratase FabZ (Synechococcus sp. (strain CC9605)).